A 1839-amino-acid chain; its full sequence is DNA-directed RNA polymerase II subunit RPB1 (1839 aa).

Cys-66, Cys-69, Cys-76, His-79, Cys-106, Cys-109, and Cys-147 together coordinate Zn(2+). Residues 152–174 form a disordered region; the sequence is DIDDVQSHSTDEPVKKSRGGCGA. Over residues 156 to 166 the composition is skewed to basic and acidic residues; that stretch reads VQSHSTDEPVK. Cys-172 provides a ligand contact to Zn(2+). Residues 326–397 mediate DNA binding; the sequence is TQKSGRPIKS…PETVTPYNIE (72 aa). Mg(2+)-binding residues include Asp-495, Asp-497, and Asp-499. The alpha-amanitin binding stretch occupies residues 785 to 795; it reads GQQNVEGKRIP. The bridging helix stretch occupies residues 829 to 841; it reads PQEFFFHAMGGRE. The span at 1538-1726 shows a compositional bias: low complexity; it reads PSSSPGYSPS…PSYGPTSPSY (189 aa). The interval 1538–1839 is disordered; that stretch reads PSSSPGYSPS…DASKDDKGNP (302 aa). Repeat copies occupy residues 1544 to 1550, 1551 to 1557, 1558 to 1564, 1565 to 1571, 1572 to 1578, 1579 to 1585, 1586 to 1592, 1593 to 1599, 1600 to 1606, 1607 to 1613, 1614 to 1620, 1621 to 1627, 1628 to 1634, 1635 to 1641, 1642 to 1648, 1649 to 1655, 1656 to 1662, 1663 to 1669, 1670 to 1676, 1677 to 1683, 1684 to 1690, 1691 to 1697, 1698 to 1704, 1705 to 1711, 1712 to 1718, 1719 to 1725, and 1726 to 1732. The tract at residues 1544-1813 is C-terminal domain (CTD); 37 X 7 AA tandem approximate repeats of Y-[GNS]-P-[QST]-[LNS]-[APT]-[AGKNRSTY]; that stretch reads YSPSSPGYSP…LPGYSPSSTG (270 aa). Polar residues predominate over residues 1727–1745; that stretch reads NPQSAKYSPSIAYSPSNAR. The stretch at 1733–1738 is one 28; approximate repeat; it reads YSPSIA. Tandem repeats lie at residues 1739 to 1745, 1752 to 1758, 1759 to 1765, 1766 to 1772, 1773 to 1779, and 1780 to 1786. A compositionally biased stretch (low complexity) spans 1747–1798; that stretch reads SPASPYSPTSPNYSPTSPSYSPTSPSYSPSSPTYSPSSPYSSGASPDYSPSA. A 35; approximate repeat occupies 1794–1799; the sequence is YSPSAG. A run of 2 repeats spans residues 1800–1806 and 1807–1813. Basic and acidic residues predominate over residues 1818–1839; that stretch reads HEGDKKDKTGKKDASKDDKGNP.

Belongs to the RNA polymerase beta' chain family. In terms of assembly, component of the RNA polymerase II (Pol II) complex consisting of at least 12 subunits. Interacts with RDM1. Interacts (via CTD) with PRP40A, PRP40B, PRP40C and CYP59. Interacts with MEE12/CCG1 and MEE14/CBP1. Binds (via CTD) to ATX1, especially when phosphorylated on 'Ser-5' of the heptapeptide repeat. Post-translationally, the tandem 7 residues repeats in the C-terminal domain (CTD) can be highly phosphorylated. The phosphorylation activates Pol II. Phosphorylation occurs mainly at residues 'Ser-2' and 'Ser-5' of the heptapeptide repeat. The phosphorylation state is believed to result from the balanced action of site-specific CTD kinases and phosphatase, and a 'CTD code' that specifies the position of Pol II within the transcription cycle has been proposed. ATX1 seems to regulate phosphorylation statment. 'Ser-2' and 'Ser-5' phosphorylation are repressed by flavopiridol (Flap) and seliciclib (Selic), inhibitors of CDK7 and CDK9.

The protein resides in the nucleus. It carries out the reaction RNA(n) + a ribonucleoside 5'-triphosphate = RNA(n+1) + diphosphate. Its function is as follows. DNA-dependent RNA polymerase catalyzes the transcription of DNA into RNA using the four ribonucleoside triphosphates as substrates. Largest and catalytic component of RNA polymerase II which synthesizes mRNA precursors and many functional non-coding RNAs. Forms the polymerase active center together with the second largest subunit. Pol II is the central component of the basal RNA polymerase II transcription machinery. It is composed of mobile elements that move relative to each other. NRPB1 is part of the core element with the central large cleft, the clamp element that moves to open and close the cleft and the jaws that are thought to grab the incoming DNA template. At the start of transcription, a single-stranded DNA template strand of the promoter is positioned within the central active site cleft of Pol II. A bridging helix emanates from NRPB1 and crosses the cleft near the catalytic site and is thought to promote translocation of Pol II by acting as a ratchet that moves the RNA-DNA hybrid through the active site by switching from straight to bent conformations at each step of nucleotide addition. During transcription elongation, Pol II moves on the template as the transcript elongates. Elongation is influenced by the phosphorylation status of the C-terminal domain (CTD) of Pol II largest subunit (NRPB1), which serves as a platform for assembly of factors that regulate transcription initiation, elongation, termination and mRNA processing. The sequence is that of DNA-directed RNA polymerase II subunit RPB1 from Arabidopsis thaliana (Mouse-ear cress).